Consider the following 157-residue polypeptide: Ribosomal RNA large subunit methyltransferase H (157 aa).

S-adenosyl-L-methionine contacts are provided by residues leucine 73, glycine 105, and methionine 124 to phenylalanine 129.

The protein belongs to the RNA methyltransferase RlmH family. Homodimer.

It is found in the cytoplasm. It carries out the reaction pseudouridine(1915) in 23S rRNA + S-adenosyl-L-methionine = N(3)-methylpseudouridine(1915) in 23S rRNA + S-adenosyl-L-homocysteine + H(+). In terms of biological role, specifically methylates the pseudouridine at position 1915 (m3Psi1915) in 23S rRNA. The sequence is that of Ribosomal RNA large subunit methyltransferase H from Bacteroides thetaiotaomicron (strain ATCC 29148 / DSM 2079 / JCM 5827 / CCUG 10774 / NCTC 10582 / VPI-5482 / E50).